Consider the following 935-residue polypeptide: Myocardin (935 aa).

The MEF2C-binding motif lies at 12-27; that stretch reads IRRKFRSVLQLRLQQR. RPEL repeat units lie at residues 18–43, 62–87, and 106–131; these read SVLQLRLQQRRTQEQLANQGLIPPLK, DSLRRKGRNRSDRASLVTMHILQAST, and DDLNEKIALRPGPLELVEKNILPMDS. The segment at 37 to 73 is disordered; sequence GLIPPLKGPTEFHDPRKQLDSAKTEDSLRRKGRNRSD. Over residues 46–73 the composition is skewed to basic and acidic residues; it reads TEFHDPRKQLDSAKTEDSLRRKGRNRSD. Positions 153 to 201 are HDAC5-binding; it reads FEDDSSRDGLSPDQARSEDPQGSTGSTPDIKSTEAPLDTIQDLTPGSES. Positions 155–283 are disordered; the sequence is DDSSRDGLSP…SPPPMDSAYA (129 aa). Polar residues-rich tracts occupy residues 172-182 and 206-216; these read PQGSTGSTPDI and AASQPGNQSDP. Over residues 244–261 the composition is skewed to basic residues; it reads NRHKKPKDPKPKVKKLKY. Residues 287-322 adopt a coiled-coil conformation; it reads QQQQLFLQLQILSQQQQQQQQQQQQQQQQQQQQQRF. Residues 337–378 are disordered; sequence EQMARNPNPSSTPLSNTPLSPVKNSISGQTGVSSLKPGPLPP. Low complexity predominate over residues 342-357; sequence NPNPSSTPLSNTPLSP. The segment covering 358 to 369 has biased composition (polar residues); that stretch reads VKNSISGQTGVS. The SAP domain occupies 380–414; that stretch reads LDDLKVSELRQQLRIRGLPVSGTKTALVDRLRPFQ. Phosphoserine; by GSK3-beta occurs at positions 454, 458, 462, and 466. Positions 498-518 are disordered; sequence ESLLSSLNGGSGPSEPDGLDS. Residues 519 to 563 adopt a coiled-coil conformation; that stretch reads EKDKMLVEKQKVINQLTWKLRQEQRQVEELRMQLQKQKSSCSDQK. Residues 579–605 form a disordered region; it reads SCPFAPQQASGKGQGHSSDSPPPACET. Residues 585–597 show a composition bias toward polar residues; the sequence is QQASGKGQGHSSD. Phosphoserine; by GSK3-beta is present on residues serine 624, serine 628, serine 632, and serine 636. Residues 654-731 form a disordered region; that stretch reads NNHYFLASSS…DAVKQQMTRS (78 aa). A compositionally biased stretch (polar residues) spans 660-691; that stretch reads ASSSGAQRENHGVSSPSSSQGCAQMTGLQSSD. A compositionally biased stretch (low complexity) spans 695-709; sequence PTFSIPSPTFSKSSS. Positions 714 to 935 are required for interaction with and ubiquitination by STUB1; it reads ITQPPSYEDA…SPMDLHLQQW (222 aa). 3 positions are modified to phosphoserine; by MAPK1 and MAPK3: serine 812, serine 859, and serine 866. Threonine 893 is modified (phosphothreonine; by MAPK1 and MAPK3).

As to quaternary structure, homodimer. Interacts with MLLT7/FOXO4. Interacts with SRF, its association does not depend on specific DNA sequences for ternary complex formation. Interacts (via C-terminal) with EP300 (via CREB-binding domain). Interacts with HDAC4 and HDAC5. Interacts with MEF2C. Interacts (via C-terminus) with STUB1/CHIP. Interacts with PURB. In terms of processing, ubiquitinated; by STUB1/CHIP at the C-terminus, leading to its degradation by the proteasome. Phosphorylation by GSK3B is required for STUB1/CHIP-mediated ubiquitination. Phosphorylation negatively regulates transcriptional activity. Phosphorylated; by GSK3B. In terms of tissue distribution, expressed in smooth muscle cell-containing tissues. Expressed in the heart. Expressed in the aorta and bladder. Weakly expression in the lung, testis and kidney. Weakly expressed in the stomach. Weakly expressed in the intestine and colon. Expressed in the heart. As to expression, predominantly expressed in cardiac muscle. In terms of tissue distribution, predominantly expressed in smooth muscle cell-rich tissues.

The protein localises to the nucleus speckle. Functionally, smooth muscle cells (SM) and cardiac muscle cells-specific transcriptional factor which uses the canonical single or multiple CArG boxes DNA sequence. Acts as a cofactor of serum response factor (SRF) with the potential to modulate SRF-target genes. Plays a crucial role in cardiogenesis, urinary bladder development, and differentiation of the smooth muscle cell lineage (myogenesis). Positively regulates the transcription of genes involved in vascular smooth muscle contraction. In terms of biological role, positively regulates the activation of smooth muscle cell gene promoter regions. Its function is as follows. Positively regulates the activation of smooth muscle cell gene promoter regions. Activation of the MYH6 promoter is enhanced in the presence of MEF2C. This Mus musculus (Mouse) protein is Myocardin (Myocd).